Reading from the N-terminus, the 311-residue chain is Malate dehydrogenase (311 aa).

Residues 7–13 (GAAGGIG) and Asp-34 each bind NAD(+). 2 residues coordinate substrate: Arg-81 and Arg-87. Residues Asn-94 and 117 to 119 (ITN) each bind NAD(+). Substrate-binding residues include Asn-119 and Arg-153. His-177 (proton acceptor) is an active-site residue. Position 227 (Met-227) interacts with NAD(+).

It belongs to the LDH/MDH superfamily. MDH type 1 family. Homodimer.

The catalysed reaction is (S)-malate + NAD(+) = oxaloacetate + NADH + H(+). In terms of biological role, catalyzes the reversible oxidation of malate to oxaloacetate. This Haemophilus influenzae (strain 86-028NP) protein is Malate dehydrogenase.